Reading from the N-terminus, the 236-residue chain is Adenylate dimethylallyltransferase (236 aa).

It belongs to the isopentenyl transferase family.

The enzyme catalyses dimethylallyl diphosphate + AMP = N(6)-(dimethylallyl)adenosine 5'-phosphate + diphosphate. Functionally, transfers dimethylallyl groups to AMP as part of the biosynthesis of cytokinin phytohormones. This is Adenylate dimethylallyltransferase (ipt) from Pantoea agglomerans pv. gypsophilae (Erwinia herbicola).